A 182-amino-acid chain; its full sequence is Adenylate kinase (182 aa).

Position 12-17 (12-17) interacts with ATP; sequence GAGKGT. An NMP region spans residues 32 to 61; that stretch reads STGELLRKEIEMNTNLGIQVKDIMNRGELV. AMP is bound by residues threonine 33, arginine 38, 59–61, 85–88, and glutamine 92; these read ELV and GYPR. Positions 126–132 are LID; it reads LRGRKDD. Residue arginine 127 participates in ATP binding. Positions 129 and 140 each coordinate AMP. Residue arginine 168 participates in ATP binding.

The protein belongs to the adenylate kinase family. In terms of assembly, monomer.

The protein localises to the cytoplasm. The enzyme catalyses AMP + ATP = 2 ADP. It participates in purine metabolism; AMP biosynthesis via salvage pathway; AMP from ADP: step 1/1. Its function is as follows. Catalyzes the reversible transfer of the terminal phosphate group between ATP and AMP. Plays an important role in cellular energy homeostasis and in adenine nucleotide metabolism. In Prochlorococcus marinus (strain AS9601), this protein is Adenylate kinase.